We begin with the raw amino-acid sequence, 661 residues long: UvrABC system protein B (661 aa).

Positions 25–182 (AGLNSKKRSQ…SDLVNLQYER (158 aa)) constitute a Helicase ATP-binding domain. 38–45 (GITGSGKT) is an ATP binding site. The short motif at 91-114 (YYDYYQPEAYIARTDTFIEKDSSI) is the Beta-hairpin element. Residues 430 to 592 (QVEDLISEIQ…IIPQTINRTI (163 aa)) form the Helicase C-terminal domain. In terms of domain architecture, UVR spans 621–656 (KAHIYKLKKAMLKAASNLEFEQATKLRDQLKNLEEA).

Belongs to the UvrB family. In terms of assembly, forms a heterotetramer with UvrA during the search for lesions. Interacts with UvrC in an incision complex.

The protein resides in the cytoplasm. Its function is as follows. The UvrABC repair system catalyzes the recognition and processing of DNA lesions. A damage recognition complex composed of 2 UvrA and 2 UvrB subunits scans DNA for abnormalities. Upon binding of the UvrA(2)B(2) complex to a putative damaged site, the DNA wraps around one UvrB monomer. DNA wrap is dependent on ATP binding by UvrB and probably causes local melting of the DNA helix, facilitating insertion of UvrB beta-hairpin between the DNA strands. Then UvrB probes one DNA strand for the presence of a lesion. If a lesion is found the UvrA subunits dissociate and the UvrB-DNA preincision complex is formed. This complex is subsequently bound by UvrC and the second UvrB is released. If no lesion is found, the DNA wraps around the other UvrB subunit that will check the other stand for damage. This is UvrABC system protein B from Rickettsia canadensis (strain McKiel).